Here is a 1002-residue protein sequence, read N- to C-terminus: Isoleucine--tRNA ligase, mitochondrial (1002 aa).

The 'HIGH' region signature appears at 94–104 (PYANGELHLGH). The 'KMSKS' region motif lies at 668–672 (KMSKS). Lysine 671 serves as a coordination point for ATP.

It belongs to the class-I aminoacyl-tRNA synthetase family.

Its subcellular location is the mitochondrion matrix. The catalysed reaction is tRNA(Ile) + L-isoleucine + ATP = L-isoleucyl-tRNA(Ile) + AMP + diphosphate. The protein is Isoleucine--tRNA ligase, mitochondrial (ISM1) of Saccharomyces cerevisiae (strain ATCC 204508 / S288c) (Baker's yeast).